Here is a 201-residue protein sequence, read N- to C-terminus: UPF0323 lipoprotein Cj0371 (201 aa).

Positions 1–26 are cleaved as a signal peptide; the sequence is MKKIKKIIQIGMIGGLAAVAGGALAG. The N-palmitoyl cysteine moiety is linked to residue cysteine 27. A lipid anchor (S-diacylglycerol cysteine) is attached at cysteine 27. The disordered stretch occupies residues 169-201; it reads NKAGTTSSASSAKKSGFFGGGSKATSSSSSFGS. Low complexity-rich tracts occupy residues 170–184 and 191–201; these read KAGTTSSASSAKKSG and KATSSSSSFGS.

The protein belongs to the UPF0323 family.

It localises to the cell membrane. The polypeptide is UPF0323 lipoprotein Cj0371 (Campylobacter jejuni subsp. jejuni serotype O:2 (strain ATCC 700819 / NCTC 11168)).